A 179-amino-acid polypeptide reads, in one-letter code: Apoptosis regulator Bcl-2 homolog (179 aa).

A BH1 motif is present at residues 76–95 (ELFKDLINWGRICGFIVFSA). Positions 126 to 141 (PWMISHGGQEEFLAFS) match the BH2 motif.

The protein belongs to the Bcl-2 family. As to quaternary structure, interacts with host BECN1 (via BH3 homology domain); this interaction allows the virus to inhibit BECN1, and thus autophagy. Interacts with host BID. Interacts with host BAX.

Its subcellular location is the host mitochondrion. The protein localises to the host endoplasmic reticulum. Suppresses apoptosis in host cell to promote the viral replication. Has the ability to potentially bind to all the members of the proapoptotic Bcl-2 family. Inhibits autophagy by interacting with host Beclin 1 (BECN1). The sequence is that of Apoptosis regulator Bcl-2 homolog from African swine fever virus (isolate Pig/Kenya/KEN-50/1950) (ASFV).